The primary structure comprises 182 residues: Orotate phosphoribosyltransferase (182 aa).

5-phospho-alpha-D-ribose 1-diphosphate is bound by residues arginine 91, lysine 92, lysine 95, histidine 97, and 117 to 125 (EDVTTTGGS). Orotate-binding residues include threonine 121 and arginine 149.

It belongs to the purine/pyrimidine phosphoribosyltransferase family. PyrE subfamily. As to quaternary structure, homodimer. Mg(2+) is required as a cofactor.

It carries out the reaction orotidine 5'-phosphate + diphosphate = orotate + 5-phospho-alpha-D-ribose 1-diphosphate. The protein operates within pyrimidine metabolism; UMP biosynthesis via de novo pathway; UMP from orotate: step 1/2. Catalyzes the transfer of a ribosyl phosphate group from 5-phosphoribose 1-diphosphate to orotate, leading to the formation of orotidine monophosphate (OMP). This chain is Orotate phosphoribosyltransferase, found in Pyrococcus abyssi (strain GE5 / Orsay).